We begin with the raw amino-acid sequence, 190 residues long: Anthranilate synthase component II (190 aa).

The Glutamine amidotransferase type-1 domain maps to 1–190; sequence MILIIDNYDS…ENFCTGIAKA (190 aa). Residue 51-53 coordinates L-glutamine; it reads GPG. Catalysis depends on cysteine 76, which acts as the Nucleophile; for GATase activity. Residues glutamine 80 and 126–127 each bind L-glutamine; that span reads SL. Catalysis depends on residues histidine 167 and glutamate 169.

In terms of assembly, tetramer of two components I and two components II.

The enzyme catalyses chorismate + L-glutamine = anthranilate + pyruvate + L-glutamate + H(+). It functions in the pathway amino-acid biosynthesis; L-tryptophan biosynthesis; L-tryptophan from chorismate: step 1/5. This chain is Anthranilate synthase component II (trpG2), found in Haloarcula marismortui (strain ATCC 43049 / DSM 3752 / JCM 8966 / VKM B-1809) (Halobacterium marismortui).